The primary structure comprises 394 residues: Chorismate synthase (394 aa).

Arg-48 lines the NADP(+) pocket. Residues 52–90 (QSMITTSRGEPDEVSIQSGLQDGYTTGTPIGMTIENKDA) form a disordered region. Residues 66–79 (SIQSGLQDGYTTGT) show a composition bias toward polar residues. FMN is bound by residues 125–127 (RSS), Gly-297, 312–316 (HAPTS), and Arg-339.

The protein belongs to the chorismate synthase family. FMNH2 is required as a cofactor.

It carries out the reaction 5-O-(1-carboxyvinyl)-3-phosphoshikimate = chorismate + phosphate. Its pathway is metabolic intermediate biosynthesis; chorismate biosynthesis; chorismate from D-erythrose 4-phosphate and phosphoenolpyruvate: step 7/7. Catalyzes the anti-1,4-elimination of the C-3 phosphate and the C-6 proR hydrogen from 5-enolpyruvylshikimate-3-phosphate (EPSP) to yield chorismate, which is the branch point compound that serves as the starting substrate for the three terminal pathways of aromatic amino acid biosynthesis. This reaction introduces a second double bond into the aromatic ring system. The protein is Chorismate synthase of Halobacterium salinarum (strain ATCC 700922 / JCM 11081 / NRC-1) (Halobacterium halobium).